The primary structure comprises 628 residues: 1-deoxy-D-xylulose-5-phosphate synthase (628 aa).

Thiamine diphosphate contacts are provided by residues histidine 72 and 113–115; that span reads GHS. Aspartate 144 is a Mg(2+) binding site. Thiamine diphosphate-binding positions include 145-146, asparagine 173, tyrosine 284, and glutamate 367; that span reads GA. A Mg(2+)-binding site is contributed by asparagine 173.

The protein belongs to the transketolase family. DXPS subfamily. In terms of assembly, homodimer. Mg(2+) serves as cofactor. Thiamine diphosphate is required as a cofactor.

The catalysed reaction is D-glyceraldehyde 3-phosphate + pyruvate + H(+) = 1-deoxy-D-xylulose 5-phosphate + CO2. Its pathway is metabolic intermediate biosynthesis; 1-deoxy-D-xylulose 5-phosphate biosynthesis; 1-deoxy-D-xylulose 5-phosphate from D-glyceraldehyde 3-phosphate and pyruvate: step 1/1. Its function is as follows. Catalyzes the acyloin condensation reaction between C atoms 2 and 3 of pyruvate and glyceraldehyde 3-phosphate to yield 1-deoxy-D-xylulose-5-phosphate (DXP). The chain is 1-deoxy-D-xylulose-5-phosphate synthase from Exiguobacterium sibiricum (strain DSM 17290 / CCUG 55495 / CIP 109462 / JCM 13490 / 255-15).